A 258-amino-acid chain; its full sequence is Aquaglyceroporin (258 aa).

The Cytoplasmic portion of the chain corresponds to 1–16; it reads MKVTFGNEYIKNFLGE. Residues 17–37 traverse the membrane as a helical segment; sequence FIGTFVLMFLGEGTTANHFAV. Topologically, residues 38-45 are extracellular; sequence PIKNDWLR. Residues 46–66 traverse the membrane as a helical segment; the sequence is LCIGWGLGVFFGILISAKLSG. Glycerol-binding residues include A67 and N70. Over 67-87 the chain is Cytoplasmic; the sequence is AHLNLAVTVGLSTIKKFNYKQ. The chain crosses the membrane as a helical span at residues 88–108; sequence IPLYFAGQLLGALSATASVYG. The Extracellular portion of the chain corresponds to 109-133; that stretch reads LYYGFVSDQTIPKFSWETGKHANVH. A helical membrane pass occupies residues 134–154; that stretch reads IASAFMHEFILTGILLLIILS. Over 155-171 the chain is Cytoplasmic; it reads VTDENICGKFHVLKVSS. The chain crosses the membrane as a helical span at residues 172–192; it reads IVGLAIICIGISFGGNTGFAL. Glycerol-binding residues include G189, F190, N193, and R196. Topologically, residues 193-217 are extracellular; the sequence is NPSRDLGARILSAIAYGFEAFTRDK. A helical transmembrane segment spans residues 218 to 238; that stretch reads CYFWIPLIAPIIGSIIFCQIY. Topologically, residues 239–258 are cytoplasmic; it reads DKIVAPLVVISEHDKGALEI.

This sequence belongs to the MIP/aquaporin (TC 1.A.8) family.

The protein localises to the cell membrane. It carries out the reaction H2O(in) = H2O(out). It catalyses the reaction glycerol(in) = glycerol(out). The catalysed reaction is urea(in) = urea(out). Mediates water and glycerol transport across the cell membrane. Permeable to urea. Required for efficient progression of parasites through the liver stages. The protein is Aquaglyceroporin of Plasmodium berghei (strain Anka).